The chain runs to 320 residues: Transaldolase (320 aa).

Lys126 (schiff-base intermediate with substrate) is an active-site residue.

Belongs to the transaldolase family. Type 1 subfamily. Homodimer.

The protein localises to the cytoplasm. It carries out the reaction D-sedoheptulose 7-phosphate + D-glyceraldehyde 3-phosphate = D-erythrose 4-phosphate + beta-D-fructose 6-phosphate. It functions in the pathway carbohydrate degradation; pentose phosphate pathway; D-glyceraldehyde 3-phosphate and beta-D-fructose 6-phosphate from D-ribose 5-phosphate and D-xylulose 5-phosphate (non-oxidative stage): step 2/3. Functionally, transaldolase is important for the balance of metabolites in the pentose-phosphate pathway. In Bordetella bronchiseptica (strain ATCC BAA-588 / NCTC 13252 / RB50) (Alcaligenes bronchisepticus), this protein is Transaldolase.